The primary structure comprises 420 residues: Acetyl-CoA acetyltransferase, mitochondrial (420 aa).

A mitochondrion-targeting transit peptide spans 1 to 33 (MAFCGPRTAARLSHSTRALHYTHRGHVSQRTLN). Catalysis depends on C119, which acts as the Acyl-thioester intermediate. CoA-binding positions include Y212, 251–253 (RVD), and K256. Position 212 (Y212) interacts with K(+). K(+)-binding residues include A273, A274, and A276. S277 is a CoA binding site. V374 is a K(+) binding site. C406 acts as the Proton donor/acceptor in catalysis.

This sequence belongs to the thiolase-like superfamily. Thiolase family. Homotetramer.

It localises to the mitochondrion. The enzyme catalyses 2 acetyl-CoA = acetoacetyl-CoA + CoA. The catalysed reaction is propanoyl-CoA + acetyl-CoA = 2-methyl-3-oxobutanoyl-CoA + CoA. The protein operates within lipid metabolism; fatty acid beta-oxidation. In terms of biological role, this is one of the enzymes that catalyzes the last step of the mitochondrial beta-oxidation pathway, an aerobic process breaking down fatty acids into acetyl-CoA. Using free coenzyme A/CoA, catalyzes the thiolytic cleavage of medium- to long-chain 3-oxoacyl-CoAs into acetyl-CoA and a fatty acyl-CoA shortened by two carbon atoms. The activity of the enzyme is reversible and it can also catalyze the condensation of two acetyl-CoA molecules into acetoacetyl-CoA. Thereby, it plays a major role in ketone body metabolism. In Xenopus tropicalis (Western clawed frog), this protein is Acetyl-CoA acetyltransferase, mitochondrial (acat1).